Consider the following 276-residue polypeptide: Bis(5'-nucleosyl)-tetraphosphatase, symmetrical (276 aa).

This sequence belongs to the Ap4A hydrolase family.

It catalyses the reaction P(1),P(4)-bis(5'-adenosyl) tetraphosphate + H2O = 2 ADP + 2 H(+). Its function is as follows. Hydrolyzes diadenosine 5',5'''-P1,P4-tetraphosphate to yield ADP. In Neisseria gonorrhoeae (strain ATCC 700825 / FA 1090), this protein is Bis(5'-nucleosyl)-tetraphosphatase, symmetrical.